The following is a 518-amino-acid chain: Apolipoprotein N-acyltransferase (518 aa).

The next 6 membrane-spanning stretches (helical) occupy residues 22-42, 63-83, 101-121, 134-154, 174-194, and 202-222; these read LAFI…LWII, FFHW…WVHV, ALLA…LAWF, LLFP…LTGF, IIGA…LALC, and LLIL…LSQI. Residues 234–484 form the CN hydrolase domain; that stretch reads VQGNIPQSMK…TGVLSATIPL (251 aa). Glutamate 273 (proton acceptor) is an active-site residue. Lysine 343 is a catalytic residue. Cysteine 395 functions as the Nucleophile in the catalytic mechanism. The chain crosses the membrane as a helical span at residues 492–512; the sequence is AKIGQTPLLILCGALLLVGFI.

It belongs to the CN hydrolase family. Apolipoprotein N-acyltransferase subfamily.

Its subcellular location is the cell inner membrane. It catalyses the reaction N-terminal S-1,2-diacyl-sn-glyceryl-L-cysteinyl-[lipoprotein] + a glycerophospholipid = N-acyl-S-1,2-diacyl-sn-glyceryl-L-cysteinyl-[lipoprotein] + a 2-acyl-sn-glycero-3-phospholipid + H(+). It participates in protein modification; lipoprotein biosynthesis (N-acyl transfer). Its function is as follows. Catalyzes the phospholipid dependent N-acylation of the N-terminal cysteine of apolipoprotein, the last step in lipoprotein maturation. This chain is Apolipoprotein N-acyltransferase, found in Shewanella oneidensis (strain ATCC 700550 / JCM 31522 / CIP 106686 / LMG 19005 / NCIMB 14063 / MR-1).